A 229-amino-acid chain; its full sequence is Cytidylate kinase (229 aa).

Residue 12–20 (GPSGSGKGT) coordinates ATP.

Belongs to the cytidylate kinase family. Type 1 subfamily.

The protein resides in the cytoplasm. It carries out the reaction CMP + ATP = CDP + ADP. The enzyme catalyses dCMP + ATP = dCDP + ADP. This Azotobacter vinelandii (strain DJ / ATCC BAA-1303) protein is Cytidylate kinase.